Here is a 203-residue protein sequence, read N- to C-terminus: MEHYLSLLIKSIFIENMALSFFLGMCTFLAVSKKISTAIGLGTAVIVVQTLTVPLNNLLYVYLLKDNAILWQHLGVNVDISFLGLIAYIGVIAAVVQILEMFLDKYVPALYSALGIFLPLITVNCAILAGSLFMVERNYTFQESMVYGVGSGVGWALAIAVMAGVREKMRYADVPKGLEGLGITFITAGLMAIGFMSFSGIQL.

6 helical membrane passes run 11 to 31 (SIFI…FLAV), 35 to 55 (ISTA…TVPL), 82 to 102 (FLGL…LEMF), 115 to 135 (GIFL…LFMV), 145 to 165 (MVYG…MAGV), and 181 to 201 (LGIT…FSGI).

The protein belongs to the NqrDE/RnfAE family. As to quaternary structure, composed of six subunits; NqrA, NqrB, NqrC, NqrD, NqrE and NqrF.

The protein resides in the cell inner membrane. The enzyme catalyses a ubiquinone + n Na(+)(in) + NADH + H(+) = a ubiquinol + n Na(+)(out) + NAD(+). Its function is as follows. NQR complex catalyzes the reduction of ubiquinone-1 to ubiquinol by two successive reactions, coupled with the transport of Na(+) ions from the cytoplasm to the periplasm. NqrA to NqrE are probably involved in the second step, the conversion of ubisemiquinone to ubiquinol. This is Na(+)-translocating NADH-quinone reductase subunit E from Dichelobacter nodosus (strain VCS1703A).